The following is a 224-amino-acid chain: Flagellar L-ring protein (224 aa).

The signal sequence occupies residues 1–15 (MKWYLVALSGLLLSG). C16 carries the N-palmitoyl cysteine lipid modification. Residue C16 is the site of S-diacylglycerol cysteine attachment.

Belongs to the FlgH family. As to quaternary structure, the basal body constitutes a major portion of the flagellar organelle and consists of four rings (L,P,S, and M) mounted on a central rod.

Its subcellular location is the cell outer membrane. The protein resides in the bacterial flagellum basal body. Its function is as follows. Assembles around the rod to form the L-ring and probably protects the motor/basal body from shearing forces during rotation. The chain is Flagellar L-ring protein from Trichlorobacter lovleyi (strain ATCC BAA-1151 / DSM 17278 / SZ) (Geobacter lovleyi).